The chain runs to 271 residues: CAAX prenyl protease 2 (271 aa).

Topologically, residues 1–9 (MISSYKYNP) are extracellular. A helical membrane pass occupies residues 10–30 (KLYFLSTFVVTYILWFTGAYL). Over 31–38 (SFSSTYSG) the chain is Cytoplasmic. Residues 39 to 59 (IYMLIMLPGLMAPFIISTILI) form a helical membrane-spanning segment. Over 60–82 (AKSKNNELKKDFINRLFNLKLIN) the chain is Extracellular. Residues 83–105 (LKTIPVVFLLMPAVILLSILLSI) form a helical membrane-spanning segment. The Cytoplasmic segment spans residues 106 to 125 (PFGGSISQFQFSGGFSFSTD). Residues 126–149 (FVPVLFLLLLAATFEELGWRGYAF) form a helical membrane-spanning segment. The active-site Proton donor/acceptor is the E140. Over 150-159 (DSLQSRYSLF) the chain is Extracellular. A helical transmembrane segment spans residues 160–179 (KASILFGIFWSLWHFPLIFV). The active-site Proton donor/acceptor is the H173. Residues 180–192 (NNSYQYEIFNQSI) are Cytoplasmic-facing. The helical transmembrane segment at 193–213 (WYGLNFFLSILPMGIIITWMC) threads the bilayer. At 214 to 219 (LKNRKS) the chain is on the extracellular side. A helical transmembrane segment spans residues 220 to 237 (IILAIIFHFLINLNQELL). Over 238–243 (AITQDT) the chain is Cytoplasmic. Residues 244 to 263 (KIIETGVLFLVAAAIILYDK) form a helical membrane-spanning segment. At 264–271 (KMFFEKLG) the chain is on the extracellular side.

This sequence belongs to the peptidase U48 family.

It is found in the cell membrane. The catalysed reaction is Hydrolyzes the peptide bond -P2-(S-farnesyl or geranylgeranyl)C-P1'-P2'-P3'-COOH where P1' and P2' are amino acids with aliphatic sidechains and P3' is any C-terminal residue.. Activity is unaffected by metalloprotease inhibitors 5 mM EDTA and 5 mM Zn(2+). Activity partially inhibited by 1,10-phenanthroline and 1,7-phenanthroline. Functionally, protease involved in the processing of a variety of prenylated proteins containing the C-terminal CAAX motif, where C is a cysteine modified with an isoprenoid lipid, A is an aliphatic amino acid and X is any C-terminal amino acid. Proteolytically removes the C-terminal three residues of farnesylated proteins, leaving the prenylated cysteine as the new C-terminus. Hydrolysis depends on a farnesylated cysteine residue and no activity is shown towards geranylgeranylated peptides. This is CAAX prenyl protease 2 from Methanococcus maripaludis (strain DSM 14266 / JCM 13030 / NBRC 101832 / S2 / LL).